Here is a 109-residue protein sequence, read N- to C-terminus: UPF0235 protein MA_4097 (109 aa).

Belongs to the UPF0235 family.

The polypeptide is UPF0235 protein MA_4097 (Methanosarcina acetivorans (strain ATCC 35395 / DSM 2834 / JCM 12185 / C2A)).